The chain runs to 515 residues: Protein disulfide-isomerase (515 aa).

Residues 1 to 22 (MAVVRVRAIVALLCLVAALGLA) form the signal peptide. 2 Thioredoxin domains span residues 23–139 (EPLE…KRTG) and 351–480 (FLEG…SGGQ). Active-site nucleophile residues include cysteine 58, cysteine 61, cysteine 402, and cysteine 405. Cystine bridges form between cysteine 58-cysteine 61 and cysteine 402-cysteine 405. The segment at 477-515 (SGGQDGAAADDDLEDLETDEETDLEEGDDDEQKIQKDEL) is disordered. Acidic residues predominate over residues 484 to 507 (AADDDLEDLETDEETDLEEGDDDE). A Prevents secretion from ER motif is present at residues 512–515 (KDEL).

It belongs to the protein disulfide isomerase family. Heterodimer; heterodimerizes with the protein microsomal triglyceride transfer MTTP. Homodimer. Monomers and homotetramers may also occur. Also constitutes the structural subunit of prolyl 4-hydroxylase. Stabilizes this enzyme and retains it in the ER without contributing to the catalytic activity. Binds UBQLN1.

It localises to the endoplasmic reticulum. It is found in the endoplasmic reticulum lumen. The protein resides in the cell membrane. It catalyses the reaction Catalyzes the rearrangement of -S-S- bonds in proteins.. In terms of biological role, this multifunctional protein catalyzes the formation, breakage and rearrangement of disulfide bonds. At the cell surface, seems to act as a reductase that cleaves disulfide bonds of proteins attached to the cell. May therefore cause structural modifications of exofacial proteins. Inside the cell, seems to form/rearrange disulfide bonds of nascent proteins. At high concentrations, functions as a chaperone that inhibits aggregation of misfolded proteins. At low concentrations, facilitates aggregation (anti-chaperone activity). Also acts a structural subunit of various enzymes such as prolyl 4-hydroxylase. The polypeptide is Protein disulfide-isomerase (P4HB) (Gallus gallus (Chicken)).